The sequence spans 276 residues: MSRYEKLFSSLAARKEGAFVPFIMLSDPNPDTALAIVRAAVAGGADALELGVPFSDPVADGPTIQASHIRALAGGATVDSAIEQIRRIRNEFPDLPIGMLIYGNVPFTRGLETFYSEFQEAGADSILLPDVPVREGAPFVAAAEKAGIDPIFIAPAQASEQTLQGVAQYSKGYIYAISRDGVTGTEKESETRGLDEVVNNVKRFGGAPILLGFGISTPQHVADAIAAGAAGAITGSALTKIVDAHLDEEGRPADGLAAAVTGFVSKMKAATKHAES.

Residues Glu-49 and Asp-60 each act as proton acceptor in the active site.

The protein belongs to the TrpA family. Tetramer of two alpha and two beta chains.

It catalyses the reaction (1S,2R)-1-C-(indol-3-yl)glycerol 3-phosphate + L-serine = D-glyceraldehyde 3-phosphate + L-tryptophan + H2O. It participates in amino-acid biosynthesis; L-tryptophan biosynthesis; L-tryptophan from chorismate: step 5/5. Its function is as follows. The alpha subunit is responsible for the aldol cleavage of indoleglycerol phosphate to indole and glyceraldehyde 3-phosphate. This Corynebacterium aurimucosum (strain ATCC 700975 / DSM 44827 / CIP 107346 / CN-1) (Corynebacterium nigricans) protein is Tryptophan synthase alpha chain.